The chain runs to 283 residues: Thymidylate synthase (283 aa).

Arg-22 is a dUMP binding site. Catalysis depends on Cys-160, which acts as the Nucleophile. DUMP-binding positions include 180-183, Asn-191, and 221-223; these read RSCD and HIY. Residue Asp-183 participates in (6R)-5,10-methylene-5,6,7,8-tetrahydrofolate binding. Residue Ser-282 participates in (6R)-5,10-methylene-5,6,7,8-tetrahydrofolate binding.

Belongs to the thymidylate synthase family. Bacterial-type ThyA subfamily. Homodimer.

The protein localises to the cytoplasm. It carries out the reaction dUMP + (6R)-5,10-methylene-5,6,7,8-tetrahydrofolate = 7,8-dihydrofolate + dTMP. It participates in pyrimidine metabolism; dTTP biosynthesis. Functionally, catalyzes the reductive methylation of 2'-deoxyuridine-5'-monophosphate (dUMP) to 2'-deoxythymidine-5'-monophosphate (dTMP) while utilizing 5,10-methylenetetrahydrofolate (mTHF) as the methyl donor and reductant in the reaction, yielding dihydrofolate (DHF) as a by-product. This enzymatic reaction provides an intracellular de novo source of dTMP, an essential precursor for DNA biosynthesis. The chain is Thymidylate synthase from Vibrio vulnificus (strain YJ016).